The chain runs to 264 residues: H-2 class II histocompatibility antigen, E-D beta chain (264 aa).

Positions 1-31 (MVWLPRVPCVAAVILLLTVLSPPVALVRDTR) are cleaved as a signal peptide. Positions 32–121 (PRFLEYVTSE…ISDKFLVRRR (90 aa)) are beta-1. Over 32-225 (PRFLEYVTSE…KAQSTSAQNK (194 aa)) the chain is Extracellular. Cystine bridges form between Cys42–Cys106 and Cys144–Cys200. N-linked (GlcNAc...) asparagine glycosylation is present at Asn46. The beta-2 stretch occupies residues 122 to 215 (VEPTVTVYPT…SLTDPVTVEW (94 aa)). The region spanning 124–214 (PTVTVYPTKT…PSLTDPVTVE (91 aa)) is the Ig-like C1-type domain. Positions 216–225 (KAQSTSAQNK) are connecting peptide. A helical membrane pass occupies residues 226-248 (MLSGVGGFVLGLLFLGAGLFIYF). At 249 to 264 (RNQKGQSGLQPTGLLS) the chain is on the cytoplasmic side.

It belongs to the MHC class II family.

The protein resides in the membrane. The protein is H-2 class II histocompatibility antigen, E-D beta chain of Mus musculus (Mouse).